A 621-amino-acid chain; its full sequence is Anthranilate synthase alpha subunit 2, chloroplastic (621 aa).

The N-terminal 87 residues, 1–87, are a transit peptide targeting the chloroplast; the sequence is MSAVSISAVK…SEEQFTKFKK (87 aa).

The protein belongs to the anthranilate synthase component I family. As to quaternary structure, heterotetramer consisting of two non-identical subunits: a beta subunit and a large alpha subunit.

It localises to the plastid. The protein resides in the chloroplast. It carries out the reaction chorismate + L-glutamine = anthranilate + pyruvate + L-glutamate + H(+). It functions in the pathway amino-acid biosynthesis; L-tryptophan biosynthesis; L-tryptophan from chorismate: step 1/5. With respect to regulation, feedback inhibition by tryptophan. In terms of biological role, part of a heterotetrameric complex that catalyzes the two-step biosynthesis of anthranilate, an intermediate in the biosynthesis of L-tryptophan. In the first step, the glutamine-binding beta subunit of anthranilate synthase (AS) provides the glutamine amidotransferase activity which generates ammonia as a substrate that, along with chorismate, is used in the second step, catalyzed by the large alpha subunit of AS to produce anthranilate. The protein is Anthranilate synthase alpha subunit 2, chloroplastic (ASA2) of Arabidopsis thaliana (Mouse-ear cress).